We begin with the raw amino-acid sequence, 469 residues long: Putative dipeptidase MW1694 (469 aa).

Position 84 (histidine 84) interacts with Zn(2+). Residue aspartate 86 is part of the active site. Aspartate 115 provides a ligand contact to Zn(2+). The active-site Proton acceptor is the glutamate 149. Positions 150, 173, and 440 each coordinate Zn(2+).

The protein belongs to the peptidase M20A family. Zn(2+) serves as cofactor.

This is Putative dipeptidase MW1694 from Staphylococcus aureus (strain MW2).